Here is a 221-residue protein sequence, read N- to C-terminus: UPF0328 protein ECU11_2110 (221 aa).

It belongs to the UPF0328 family.

The chain is UPF0328 protein ECU11_2110 from Encephalitozoon cuniculi (strain GB-M1) (Microsporidian parasite).